The following is a 213-amino-acid chain: Imidazole glycerol phosphate synthase subunit HisH (213 aa).

The Glutamine amidotransferase type-1 domain maps to 8 to 213 (TVALIDYGAG…FLSRFLDWNP (206 aa)). The active-site Nucleophile is Cys91. Active-site residues include His193 and Glu195.

As to quaternary structure, heterodimer of HisH and HisF.

It is found in the cytoplasm. The catalysed reaction is 5-[(5-phospho-1-deoxy-D-ribulos-1-ylimino)methylamino]-1-(5-phospho-beta-D-ribosyl)imidazole-4-carboxamide + L-glutamine = D-erythro-1-(imidazol-4-yl)glycerol 3-phosphate + 5-amino-1-(5-phospho-beta-D-ribosyl)imidazole-4-carboxamide + L-glutamate + H(+). It catalyses the reaction L-glutamine + H2O = L-glutamate + NH4(+). Its pathway is amino-acid biosynthesis; L-histidine biosynthesis; L-histidine from 5-phospho-alpha-D-ribose 1-diphosphate: step 5/9. In terms of biological role, IGPS catalyzes the conversion of PRFAR and glutamine to IGP, AICAR and glutamate. The HisH subunit catalyzes the hydrolysis of glutamine to glutamate and ammonia as part of the synthesis of IGP and AICAR. The resulting ammonia molecule is channeled to the active site of HisF. The polypeptide is Imidazole glycerol phosphate synthase subunit HisH (Zymomonas mobilis subsp. mobilis (strain ATCC 31821 / ZM4 / CP4)).